We begin with the raw amino-acid sequence, 126 residues long: Heterotrimeric G protein gamma subunit GPG1 (126 aa).

G proteins are composed of 3 units, alpha, beta and gamma. GPG1 interacts with the beta subunits GBP1 and GPB2.

Its subcellular location is the cytoplasm. Gamma subunit of a guanine nucleotide-binding protein (G protein). G proteins are involved as modulators or transducers in various transmembrane signaling systems. The beta and gamma chains are required for the GTPase activity, for replacement of GDP by GTP, and for G protein-effector interaction. Involved in the determination of the cAMP level according to nutritional conditions, most probably as a regulator of cAMP phosphodiesterase. Required for the control of pseudohyphal and haploid invasive growth. The sequence is that of Heterotrimeric G protein gamma subunit GPG1 (GPG1) from Saccharomyces cerevisiae (strain ATCC 204508 / S288c) (Baker's yeast).